The sequence spans 349 residues: UDP-3-O-acylglucosamine N-acyltransferase (349 aa).

His-246 functions as the Proton acceptor in the catalytic mechanism.

This sequence belongs to the transferase hexapeptide repeat family. LpxD subfamily. As to quaternary structure, homotrimer.

The catalysed reaction is a UDP-3-O-[(3R)-3-hydroxyacyl]-alpha-D-glucosamine + a (3R)-hydroxyacyl-[ACP] = a UDP-2-N,3-O-bis[(3R)-3-hydroxyacyl]-alpha-D-glucosamine + holo-[ACP] + H(+). The protein operates within bacterial outer membrane biogenesis; LPS lipid A biosynthesis. In terms of biological role, catalyzes the N-acylation of UDP-3-O-acylglucosamine using 3-hydroxyacyl-ACP as the acyl donor. Is involved in the biosynthesis of lipid A, a phosphorylated glycolipid that anchors the lipopolysaccharide to the outer membrane of the cell. The polypeptide is UDP-3-O-acylglucosamine N-acyltransferase (Nostoc sp. (strain PCC 7120 / SAG 25.82 / UTEX 2576)).